Here is a 321-residue protein sequence, read N- to C-terminus: Malate dehydrogenase (321 aa).

NAD(+) contacts are provided by residues Gly-10–Gly-15 and Asp-34. Positions 83 and 89 each coordinate substrate. Residues Asn-96 and Ile-119–Asn-121 contribute to the NAD(+) site. 2 residues coordinate substrate: Asn-121 and Arg-152. Residue His-176 is the Proton acceptor of the active site.

It belongs to the LDH/MDH superfamily. MDH type 3 family.

It catalyses the reaction (S)-malate + NAD(+) = oxaloacetate + NADH + H(+). Catalyzes the reversible oxidation of malate to oxaloacetate. The protein is Malate dehydrogenase of Trichlorobacter lovleyi (strain ATCC BAA-1151 / DSM 17278 / SZ) (Geobacter lovleyi).